Consider the following 208-residue polypeptide: Ribosomal RNA large subunit methyltransferase E (208 aa).

The S-adenosyl-L-methionine site is built by Gly-61, Trp-63, Asp-81, Asp-97, and Asp-122. Lys-162 serves as the catalytic Proton acceptor.

The protein belongs to the class I-like SAM-binding methyltransferase superfamily. RNA methyltransferase RlmE family.

The protein resides in the cytoplasm. It carries out the reaction uridine(2552) in 23S rRNA + S-adenosyl-L-methionine = 2'-O-methyluridine(2552) in 23S rRNA + S-adenosyl-L-homocysteine + H(+). In terms of biological role, specifically methylates the uridine in position 2552 of 23S rRNA at the 2'-O position of the ribose in the fully assembled 50S ribosomal subunit. This is Ribosomal RNA large subunit methyltransferase E from Pseudomonas putida (strain GB-1).